The primary structure comprises 238 residues: Small ribosomal subunit protein uS2 (238 aa).

This sequence belongs to the universal ribosomal protein uS2 family.

This chain is Small ribosomal subunit protein uS2, found in Haemophilus ducreyi (strain 35000HP / ATCC 700724).